A 736-amino-acid chain; its full sequence is Subtilisin-like protease SBT4.6 (736 aa).

The signal sequence occupies residues Met-1–Ala-24. The propeptide at Gly-25–Gln-111 is activation peptide. The Inhibitor I9 domain occupies Val-33–Leu-110. The Peptidase S8 domain occupies Ser-115 to Ile-589. The active-site Charge relay system is Asp-143. N-linked (GlcNAc...) asparagine glycosylation occurs at Asn-174. Catalysis depends on His-204, which acts as the Charge relay system. Asn-227 carries N-linked (GlcNAc...) asparagine glycosylation. Residues Lys-362 to Tyr-442 enclose the PA domain. Asn-450 is a glycosylation site (N-linked (GlcNAc...) asparagine). The active-site Charge relay system is Ser-527. N-linked (GlcNAc...) asparagine glycans are attached at residues Asn-564, Asn-598, Asn-610, and Asn-668.

This sequence belongs to the peptidase S8 family. The C-terminal propeptide is autocleaved.

It is found in the secreted. This is Subtilisin-like protease SBT4.6 from Arabidopsis thaliana (Mouse-ear cress).